A 371-amino-acid polypeptide reads, in one-letter code: Anhydro-N-acetylmuramic acid kinase (371 aa).

15–22 contributes to the ATP binding site; sequence GTSLDGVD.

This sequence belongs to the anhydro-N-acetylmuramic acid kinase family.

It catalyses the reaction 1,6-anhydro-N-acetyl-beta-muramate + ATP + H2O = N-acetyl-D-muramate 6-phosphate + ADP + H(+). Its pathway is amino-sugar metabolism; 1,6-anhydro-N-acetylmuramate degradation. It functions in the pathway cell wall biogenesis; peptidoglycan recycling. In terms of biological role, catalyzes the specific phosphorylation of 1,6-anhydro-N-acetylmuramic acid (anhMurNAc) with the simultaneous cleavage of the 1,6-anhydro ring, generating MurNAc-6-P. Is required for the utilization of anhMurNAc either imported from the medium or derived from its own cell wall murein, and thus plays a role in cell wall recycling. In Cereibacter sphaeroides (strain ATCC 17023 / DSM 158 / JCM 6121 / CCUG 31486 / LMG 2827 / NBRC 12203 / NCIMB 8253 / ATH 2.4.1.) (Rhodobacter sphaeroides), this protein is Anhydro-N-acetylmuramic acid kinase.